We begin with the raw amino-acid sequence, 540 residues long: Chaperonin GroEL (540 aa).

Residues 30–33, 87–91, Gly414, 479–481, and Asp495 each bind ATP; these read TLGP, DGTTT, and NAL.

Belongs to the chaperonin (HSP60) family. As to quaternary structure, forms a cylinder of 14 subunits composed of two heptameric rings stacked back-to-back. Interacts with the co-chaperonin GroES.

It localises to the cytoplasm. The enzyme catalyses ATP + H2O + a folded polypeptide = ADP + phosphate + an unfolded polypeptide.. In terms of biological role, together with its co-chaperonin GroES, plays an essential role in assisting protein folding. The GroEL-GroES system forms a nano-cage that allows encapsulation of the non-native substrate proteins and provides a physical environment optimized to promote and accelerate protein folding. The polypeptide is Chaperonin GroEL (Carboxydothermus hydrogenoformans (strain ATCC BAA-161 / DSM 6008 / Z-2901)).